We begin with the raw amino-acid sequence, 283 residues long: NADPH-dependent 3-dehydrocapnine reductase (283 aa).

Tyr-153 functions as the Proton acceptor in the catalytic mechanism.

This sequence belongs to the short-chain dehydrogenases/reductases (SDR) family.

It carries out the reaction 3-oxocapnine + NADPH + H(+) = capnine + NADP(+). The protein operates within lipid metabolism. Reductase involved in the biosynthesis of capnine, a sulfonolipid present in the outer membrane of gliding Bacteroidetes and essential for gliding motility. Catalyzes the reduction of 3-dehydrocapnine to capnine. In Ornithobacterium rhinotracheale, this protein is NADPH-dependent 3-dehydrocapnine reductase.